The primary structure comprises 1218 residues: MLTKFETKSNRVKGLSFHPRRPWILASLHSGVIQMWDYRMGTLLDRFDEHDGPVRGVHFHATQPLFVSGGDDYKIKVWNYKTHRCLFTLHGHLDYIRTVQFHHECPWIVSASDDQTIRIWNWQSRTCVAVLTGHNHYVMCASFHPKEDLVVSASLDQTVRVWDISALRKKSVSPADDILRLTQMNTDLFGGVDAVVKYVLEGHDRGVNWASFHPTLPLIVSGADDRQVKIWRMNDTKAWEVDTLRGHMNNVSCVMFHAKQDIIVSNSEDKSIRIWDATKRTGIQTFRREHDRFWILSAHPEMNLLAAGHDSGMIVFKLERERPAFSVSGDTVFYVKDRFLRFFEFTTQKEVQLAPIRRPGSVSLNQSPKTLSYSPTENAVLICSDVDGGSYELYIVPKDSAGRADYLQDAKKGAGGSAVFVARNRFAVLEKSSNQVLVRNLKNEIVKKSPLPIATDAIYYAGTGSLLCKAEDRVTIFDLQQRLILGELQAPSVKYVVWSSDMESVALLSKHAVVIANKKLVHRCTLHETIRVKSGAWDENGVFIYTTLNHIKYCLPNGDSGIIKTLDVPIYITRVIGNNIFCLDRDGKNKLVTVDASEYIFKLALLRKRYDHVMSMIKNSQLCGQAVISYLQQKGFPEVALHFVKDEKTRFNLALESGNIQIAVASAKEIDDKDHWYRLGIEALRQGNVGIVEYAYQRTKNFERLAFLYLITGYMDKVGFMCKIAGQNNNLMGQFHNALYLGDAMKRVEILENAGQLPLAYITATTHGLTEIADRLAAELGENIPSLPEGKARSLLIPPAPLTASGDWPLLRVMRGIFEGGLDATGKAELEEDDEAAGADWGDEGLDIVDASEAMANGGDGFDAEEGEANEEDGEEGGWDLEDLELLPEAETPKNAGNARSAVFVAPPPGMPVSLIWTQKSSLAGEHAAAGNFDTAMRLLSRQLGIKNFAPLKPLFLDLHMGSHSYLHALATAPIIPVAVEKGWSESASPNVRGPPALVFTFPQMEDRLKAAYKATTDGKFPEALRQFLSILHTIPLIVVDSRREVDEVKELIEIVREYVLGLRMELKRKELRDDVNRQQELAAYFTNCKLQRVHMRLVLGSAMGLCYKQKNFATAEHFARMLLENNPNEAQARRARQVQQQCSGKKDSSELNYDYRNPFVVCGATYVPIYRGQKDVSCPYCGSRFVPSIEGQLCTICELAVVGADASGLVCSPTQLR.

WD repeat units follow at residues 7-48 (TKSN…DRFD), 49-88 (EHDG…CLFT), 91-132 (GHLD…AVLT), 133-172 (GHNH…KKSV), 202-241 (GHDR…AWEV), 246-285 (GHMN…GIQT), 288-326 (REHD…PAFS), and 363-404 (SLNQ…AGRA). A disordered region spans residues 855-876 (MANGGDGFDAEEGEANEEDGEE). Over residues 862 to 876 (FDAEEGEANEEDGEE) the composition is skewed to acidic residues.

In terms of assembly, oligomeric complex that consists of at least the alpha, beta, beta', gamma, delta, epsilon and zeta subunits.

Its subcellular location is the cytoplasm. It is found in the golgi apparatus membrane. It localises to the cytoplasmic vesicle. The protein resides in the COPI-coated vesicle membrane. Its function is as follows. The coatomer is a cytosolic protein complex that binds to dilysine motifs and reversibly associates with Golgi non-clathrin-coated vesicles, which further mediate biosynthetic protein transport from the ER, via the Golgi up to the trans Golgi network. Coatomer complex is required for budding from Golgi membranes, and is essential for the retrograde Golgi-to-ER transport of dilysine-tagged proteins. This Oryza sativa subsp. japonica (Rice) protein is Coatomer subunit alpha-2.